Consider the following 226-residue polypeptide: Enolase-phosphatase E1 (226 aa).

This sequence belongs to the HAD-like hydrolase superfamily. MasA/MtnC family. As to quaternary structure, monomer. It depends on Mg(2+) as a cofactor.

It carries out the reaction 5-methylsulfanyl-2,3-dioxopentyl phosphate + H2O = 1,2-dihydroxy-5-(methylsulfanyl)pent-1-en-3-one + phosphate. It functions in the pathway amino-acid biosynthesis; L-methionine biosynthesis via salvage pathway; L-methionine from S-methyl-5-thio-alpha-D-ribose 1-phosphate: step 3/6. The protein operates within amino-acid biosynthesis; L-methionine biosynthesis via salvage pathway; L-methionine from S-methyl-5-thio-alpha-D-ribose 1-phosphate: step 4/6. Its function is as follows. Bifunctional enzyme that catalyzes the enolization of 2,3-diketo-5-methylthiopentyl-1-phosphate (DK-MTP-1-P) into the intermediate 2-hydroxy-3-keto-5-methylthiopentenyl-1-phosphate (HK-MTPenyl-1-P), which is then dephosphorylated to form the acireductone 1,2-dihydroxy-3-keto-5-methylthiopentene (DHK-MTPene). This Alcanivorax borkumensis (strain ATCC 700651 / DSM 11573 / NCIMB 13689 / SK2) protein is Enolase-phosphatase E1.